We begin with the raw amino-acid sequence, 178 residues long: Large ribosomal subunit protein uL13m (178 aa).

The protein belongs to the universal ribosomal protein uL13 family. In terms of assembly, component of the mitochondrial ribosome large subunit (39S) which comprises a 16S rRNA and about 50 distinct proteins. Interacts with OXA1L.

Its subcellular location is the mitochondrion. In Bos taurus (Bovine), this protein is Large ribosomal subunit protein uL13m (MRPL13).